Reading from the N-terminus, the 23-residue chain is Caerulein precursor fragment BM2 (23 aa).

As to expression, expressed by the skin glands.

It is found in the secreted. Functionally, antimicrobial peptide. In Xenopus boumbaensis (Mawa clawed frog), this protein is Caerulein precursor fragment BM2.